Consider the following 567-residue polypeptide: DNA ligase (567 aa).

Glu246 is a binding site for ATP. Lys248 serves as the catalytic N6-AMP-lysine intermediate. ATP is bound by residues Arg253, Arg268, Glu298, Phe339, Arg415, and Lys421.

The protein belongs to the ATP-dependent DNA ligase family. Requires Mg(2+) as cofactor.

The catalysed reaction is ATP + (deoxyribonucleotide)n-3'-hydroxyl + 5'-phospho-(deoxyribonucleotide)m = (deoxyribonucleotide)n+m + AMP + diphosphate.. Functionally, DNA ligase that seals nicks in double-stranded DNA during DNA replication, DNA recombination and DNA repair. This Nanoarchaeum equitans (strain Kin4-M) protein is DNA ligase.